The primary structure comprises 307 residues: Type 2A encapsulin shell protein (307 aa).

This sequence belongs to the encapsulin family. Family 2A subfamily. In terms of assembly, the encapsulin nanocompartment is formed by 60 subunits; monomers form pentamers which assemble to form shells. There are 12 charged pores where the pentamers meet as well as 3-fold axis channels and dimer channels. Isolated from bacteria in a complex with cysteine desulfurase (AC Q9KII6).

The protein localises to the encapsulin nanocompartment. It is found in the cell membrane. Functionally, shell component of a type 2A encapsulin nanocompartment. Forms encapsulin nanocompartments about 24 nm in diameter from 60 monomers, probably involved in sulfur metabolism. Probably encapsulates cysteine desulfurase. The protein is Type 2A encapsulin shell protein of Mycolicibacterium paratuberculosis (strain ATCC BAA-968 / K-10) (Mycobacterium paratuberculosis).